Here is a 593-residue protein sequence, read N- to C-terminus: 3-hydroxy-3-methylglutaryl-coenzyme A reductase (593 aa).

The segment at 1–36 is disordered; it reads MDVRRRSINSIHQIPSVGGTAPPMLKPKQPTKVDAV. Transmembrane regions (helical) follow at residues 52–72 and 94–114; these read LYIT…YLLV and AIFT…IGLV. Residues 115–177 form a linker region; the sequence is QPFTSRSSHD…PVPISPPSSE (63 aa). Residues 178 to 593 are catalytic; that stretch reads EDEEIIKSVV…SNKDVTKASS (416 aa). Residue glutamate 272 is the Charge relay system of the active site. Asparagine 336 is a glycosylation site (N-linked (GlcNAc...) asparagine). Residue lysine 404 is the Charge relay system of the active site. Asparagine 449 is a glycosylation site (N-linked (GlcNAc...) asparagine). Catalysis depends on aspartate 480, which acts as the Charge relay system. The active-site Proton donor is the histidine 578. An N-linked (GlcNAc...) asparagine glycan is attached at asparagine 582.

This sequence belongs to the HMG-CoA reductase family.

Its subcellular location is the endoplasmic reticulum membrane. It catalyses the reaction (R)-mevalonate + 2 NADP(+) + CoA = (3S)-3-hydroxy-3-methylglutaryl-CoA + 2 NADPH + 2 H(+). It participates in metabolic intermediate biosynthesis; (R)-mevalonate biosynthesis; (R)-mevalonate from acetyl-CoA: step 3/3. Its function is as follows. Catalyzes the synthesis of mevalonate. The specific precursor of all isoprenoid compounds present in plants. This is 3-hydroxy-3-methylglutaryl-coenzyme A reductase from Camptotheca acuminata (Happy tree).